The following is a 554-amino-acid chain: Hydroxylamine reductase (554 aa).

4 residues coordinate [2Fe-2S] cluster: C3, C6, C18, and C25. H252, E276, C320, C408, C436, C461, E495, and K497 together coordinate hybrid [4Fe-2O-2S] cluster. C408 carries the post-translational modification Cysteine persulfide.

The protein belongs to the HCP family. [2Fe-2S] cluster is required as a cofactor. It depends on hybrid [4Fe-2O-2S] cluster as a cofactor.

The protein localises to the cytoplasm. The enzyme catalyses A + NH4(+) + H2O = hydroxylamine + AH2 + H(+). Catalyzes the reduction of hydroxylamine to form NH(3) and H(2)O. This Shewanella baltica (strain OS155 / ATCC BAA-1091) protein is Hydroxylamine reductase.